The primary structure comprises 422 residues: UDP-N-acetylglucosamine 1-carboxyvinyltransferase (422 aa).

Phosphoenolpyruvate is bound at residue 24-25; the sequence is KN. R93 provides a ligand contact to UDP-N-acetyl-alpha-D-glucosamine. The active-site Proton donor is C117. Position 117 is a 2-(S-cysteinyl)pyruvic acid O-phosphothioketal (C117). Residues 122–126, 162–165, D307, and I329 each bind UDP-N-acetyl-alpha-D-glucosamine; these read RPVDL and KVSV.

It belongs to the EPSP synthase family. MurA subfamily.

Its subcellular location is the cytoplasm. The catalysed reaction is phosphoenolpyruvate + UDP-N-acetyl-alpha-D-glucosamine = UDP-N-acetyl-3-O-(1-carboxyvinyl)-alpha-D-glucosamine + phosphate. Its pathway is cell wall biogenesis; peptidoglycan biosynthesis. In terms of biological role, cell wall formation. Adds enolpyruvyl to UDP-N-acetylglucosamine. This is UDP-N-acetylglucosamine 1-carboxyvinyltransferase from Vibrio atlanticus (strain LGP32) (Vibrio splendidus (strain Mel32)).